Consider the following 1756-residue polypeptide: Periplakin (1756 aa).

The residue at position 14 (serine 14) is a Phosphoserine. 2 coiled-coil regions span residues 16–125 (TVQT…KQIY) and 188–389 (KEQN…QQVV). Spectrin repeat units lie at residues 216 to 317 (QDYM…SHLK), 323 to 485 (HQFH…RTLQ), 505 to 612 (RQLL…EKVD), and 733 to 861 (EHFH…QNLE). The SH3 domain maps to 399–455 (LKPIPVEALCDFEGEQGLISRGYSYTLQKNNGESWELMDSAGNKLIAPAVCFVIPPT). Position 465 is a phosphoserine (serine 465). 2 coiled-coil regions span residues 585–820 (LLRT…GRRS) and 886–1645 (DSGV…SVAV). 4 positions are modified to phosphoserine: serine 887, serine 949, serine 1584, and serine 1657. Residues 1557–1756 (ELDFLREENH…ELAVLVSGQK (200 aa)) are interacts with BFSP2 and VIM. Plectin repeat units follow at residues 1651–1685 (ENHLRRSIVVIHPDTGRELSPEEAHRAGLIDWNMF) and 1700–1735 (VKGPNGESSVIHDRKSGKKFSIEEALQSGRLTPAQY).

This sequence belongs to the plakin or cytolinker family. Homodimer or a heterodimer with EVPL. Found in a complex composed of PPL (via C-terminal linker domain), BFSP1 and BFSP2 in the retinal lens. Within the complex interacts (via C-terminal linker domain) with BFSP2. Interacts with VIM. Binds to the PH domain of AKT1. Interacts with FCGR1A. May interact with PPHLN1. Expressed in stratified squamous epithelia and in some other epithelia.

The protein resides in the cell junction. It localises to the desmosome. Its subcellular location is the cytoplasm. It is found in the cytoskeleton. The protein localises to the cell membrane. Its function is as follows. Component of the cornified envelope of keratinocytes. May link the cornified envelope to desmosomes and intermediate filaments. May act as a localization signal in PKB/AKT-mediated signaling. This Homo sapiens (Human) protein is Periplakin (PPL).